The chain runs to 309 residues: tRNA dimethylallyltransferase (309 aa).

Position 10–17 (10–17 (GPTAVGKT)) interacts with ATP. Residue 12–17 (TAVGKT) coordinates substrate. Residues 35–38 (DSMQ) are interaction with substrate tRNA.

Belongs to the IPP transferase family. In terms of assembly, monomer. Requires Mg(2+) as cofactor.

It carries out the reaction adenosine(37) in tRNA + dimethylallyl diphosphate = N(6)-dimethylallyladenosine(37) in tRNA + diphosphate. In terms of biological role, catalyzes the transfer of a dimethylallyl group onto the adenine at position 37 in tRNAs that read codons beginning with uridine, leading to the formation of N6-(dimethylallyl)adenosine (i(6)A). This is tRNA dimethylallyltransferase from Clostridium botulinum (strain Alaska E43 / Type E3).